The chain runs to 73 residues: U-scoloptoxin(15)-Sm2a (73 aa).

An N-terminal signal peptide occupies residues 1–20; the sequence is MKFYIVFCLFVVLLINFAAA. 2 disulfides stabilise this stretch: cysteine 39–cysteine 66 and cysteine 43–cysteine 68.

Belongs to the scoloptoxin-15 family. As to expression, expressed by the venom gland.

It localises to the secreted. Its function is as follows. Activity unknown, even that a lot of targets (Kv, Nav, Cav) have been tested and activities on insects and mice have been tested. This chain is U-scoloptoxin(15)-Sm2a, found in Scolopendra morsitans (Tanzanian blue ringleg centipede).